A 180-amino-acid chain; its full sequence is Pyruvoyl-dependent arginine decarboxylase (180 aa).

Ser41 bears the Pyruvic acid (Ser) mark.

The protein belongs to the PdaD family. Requires pyruvate as cofactor.

It carries out the reaction L-arginine + H(+) = agmatine + CO2. In Methanococcoides burtonii (strain DSM 6242 / NBRC 107633 / OCM 468 / ACE-M), this protein is Pyruvoyl-dependent arginine decarboxylase.